A 353-amino-acid polypeptide reads, in one-letter code: tRNA-specific 2-thiouridylase MnmA (353 aa).

ATP is bound by residues 7–14 (GLSGGVDS) and Leu-33. Cys-94 functions as the Nucleophile in the catalytic mechanism. Cys-94 and Cys-193 are joined by a disulfide. Gly-119 contributes to the ATP binding site. Residues 143–145 (KDQ) form an interaction with tRNA region. Cys-193 serves as the catalytic Cysteine persulfide intermediate. The segment at 298–299 (RY) is interaction with tRNA.

It belongs to the MnmA/TRMU family.

The protein localises to the cytoplasm. The catalysed reaction is S-sulfanyl-L-cysteinyl-[protein] + uridine(34) in tRNA + AH2 + ATP = 2-thiouridine(34) in tRNA + L-cysteinyl-[protein] + A + AMP + diphosphate + H(+). Functionally, catalyzes the 2-thiolation of uridine at the wobble position (U34) of tRNA, leading to the formation of s(2)U34. This chain is tRNA-specific 2-thiouridylase MnmA, found in Picosynechococcus sp. (strain ATCC 27264 / PCC 7002 / PR-6) (Agmenellum quadruplicatum).